We begin with the raw amino-acid sequence, 278 residues long: Large ribosomal subunit protein uL2 (278 aa).

The segment at 223 to 278 (GVAMNPIDHPHGGGEGRTSGGRHPVTPWGFPTKGKKTRSNKRTDTFIVSSRHNRKK) is disordered.

Belongs to the universal ribosomal protein uL2 family. As to quaternary structure, part of the 50S ribosomal subunit. Forms a bridge to the 30S subunit in the 70S ribosome.

Functionally, one of the primary rRNA binding proteins. Required for association of the 30S and 50S subunits to form the 70S ribosome, for tRNA binding and peptide bond formation. It has been suggested to have peptidyltransferase activity; this is somewhat controversial. Makes several contacts with the 16S rRNA in the 70S ribosome. The sequence is that of Large ribosomal subunit protein uL2 from Methylobacterium sp. (strain 4-46).